The sequence spans 749 residues: 5-methyltetrahydropteroyltriglutamate--homocysteine methyltransferase (749 aa).

Residues 15 to 18 (RELK) and K114 each bind 5-methyltetrahydropteroyltri-L-glutamate. Residues 425-427 (IGS) and E478 each bind L-homocysteine. Residues 425 to 427 (IGS) and E478 each bind L-methionine. W555 is a 5-methyltetrahydropteroyltri-L-glutamate binding site. Residue D593 participates in L-homocysteine binding. Residue D593 coordinates L-methionine. Position 599 (E599) interacts with 5-methyltetrahydropteroyltri-L-glutamate. Zn(2+) contacts are provided by H636, C638, and E660. The Proton donor role is filled by H689. C721 provides a ligand contact to Zn(2+).

This sequence belongs to the vitamin-B12 independent methionine synthase family. Zn(2+) is required as a cofactor.

It catalyses the reaction 5-methyltetrahydropteroyltri-L-glutamate + L-homocysteine = tetrahydropteroyltri-L-glutamate + L-methionine. It functions in the pathway amino-acid biosynthesis; L-methionine biosynthesis via de novo pathway; L-methionine from L-homocysteine (MetE route): step 1/1. Its function is as follows. Catalyzes the transfer of a methyl group from 5-methyltetrahydrofolate to homocysteine resulting in methionine formation. The chain is 5-methyltetrahydropteroyltriglutamate--homocysteine methyltransferase from Streptococcus suis (strain 05ZYH33).